Here is a 678-residue protein sequence, read N- to C-terminus: ABC transporter F family member 2 (678 aa).

ABC transporter domains are found at residues 84 to 342 (VRLE…EAQY) and 411 to 626 (VTVK…AREL). ATP is bound by residues 116–123 (GVNGAGKT) and 443–450 (GPNGCGKS). A disordered region spans residues 630–678 (AELEEKAPKVKAKSKMSKAEREARKKQKMKAFQASKKKSKSSKNAKRWN). A compositionally biased stretch (basic residues) spans 653 to 678 (RKKQKMKAFQASKKKSKSSKNAKRWN).

The protein belongs to the ABC transporter superfamily. ABCF family. EF3 (TC 3.A.1.121) subfamily.

This is ABC transporter F family member 2 (ABCF2) from Arabidopsis thaliana (Mouse-ear cress).